The primary structure comprises 84 residues: Small ribosomal subunit protein bS16 (84 aa).

The protein belongs to the bacterial ribosomal protein bS16 family.

This chain is Small ribosomal subunit protein bS16, found in Burkholderia ambifaria (strain MC40-6).